The following is a 335-amino-acid chain: Dihydroorotate dehydrogenase (quinone) (335 aa).

Residues 58-62 and threonine 82 contribute to the FMN site; that span reads AGADK. Lysine 62 contributes to the substrate binding site. 107-111 is a binding site for substrate; sequence NRNGF. 2 residues coordinate FMN: asparagine 135 and asparagine 168. Asparagine 168 is a substrate binding site. Residue serine 171 is the Nucleophile of the active site. Asparagine 173 lines the substrate pocket. Positions 213 and 241 each coordinate FMN. 242–243 contributes to the substrate binding site; the sequence is NT. FMN contacts are provided by residues glycine 264, glycine 293, and 314–315; that span reads YS.

Belongs to the dihydroorotate dehydrogenase family. Type 2 subfamily. As to quaternary structure, monomer. FMN serves as cofactor.

The protein localises to the cell membrane. It carries out the reaction (S)-dihydroorotate + a quinone = orotate + a quinol. It participates in pyrimidine metabolism; UMP biosynthesis via de novo pathway; orotate from (S)-dihydroorotate (quinone route): step 1/1. Functionally, catalyzes the conversion of dihydroorotate to orotate with quinone as electron acceptor. This Actinobacillus pleuropneumoniae serotype 3 (strain JL03) protein is Dihydroorotate dehydrogenase (quinone).